We begin with the raw amino-acid sequence, 61 residues long: UPF0434 protein PFL_1779 (61 aa).

It belongs to the UPF0434 family.

This is UPF0434 protein PFL_1779 from Pseudomonas fluorescens (strain ATCC BAA-477 / NRRL B-23932 / Pf-5).